The chain runs to 80 residues: Exodeoxyribonuclease 7 small subunit (80 aa).

Belongs to the XseB family. Heterooligomer composed of large and small subunits.

It localises to the cytoplasm. It catalyses the reaction Exonucleolytic cleavage in either 5'- to 3'- or 3'- to 5'-direction to yield nucleoside 5'-phosphates.. Its function is as follows. Bidirectionally degrades single-stranded DNA into large acid-insoluble oligonucleotides, which are then degraded further into small acid-soluble oligonucleotides. The chain is Exodeoxyribonuclease 7 small subunit from Enterobacter sp. (strain 638).